We begin with the raw amino-acid sequence, 264 residues long: Thymidylate synthase (264 aa).

Arginine 21 serves as a coordination point for dUMP. Residue histidine 51 coordinates (6R)-5,10-methylene-5,6,7,8-tetrahydrofolate. A dUMP-binding site is contributed by 126 to 127 (RR). Cysteine 146 serves as the catalytic Nucleophile. DUMP contacts are provided by residues 166–169 (RSAD), asparagine 177, and 207–209 (HLY). Residue aspartate 169 participates in (6R)-5,10-methylene-5,6,7,8-tetrahydrofolate binding. Residue alanine 263 coordinates (6R)-5,10-methylene-5,6,7,8-tetrahydrofolate.

Belongs to the thymidylate synthase family. Bacterial-type ThyA subfamily. In terms of assembly, homodimer.

The protein resides in the cytoplasm. The catalysed reaction is dUMP + (6R)-5,10-methylene-5,6,7,8-tetrahydrofolate = 7,8-dihydrofolate + dTMP. It participates in pyrimidine metabolism; dTTP biosynthesis. Functionally, catalyzes the reductive methylation of 2'-deoxyuridine-5'-monophosphate (dUMP) to 2'-deoxythymidine-5'-monophosphate (dTMP) while utilizing 5,10-methylenetetrahydrofolate (mTHF) as the methyl donor and reductant in the reaction, yielding dihydrofolate (DHF) as a by-product. This enzymatic reaction provides an intracellular de novo source of dTMP, an essential precursor for DNA biosynthesis. The protein is Thymidylate synthase of Methylobacterium nodulans (strain LMG 21967 / CNCM I-2342 / ORS 2060).